The sequence spans 624 residues: Chaperone protein HtpG (624 aa).

The a; substrate-binding stretch occupies residues 1-338 (MNNKNKITHT…SQDLPLNISR (338 aa)). The b stretch occupies residues 339 to 552 (EILQDSSITH…TNDMSTQMAK (214 aa)). The segment at 553–624 (IFSAAGQPIP…IQRINNFFIS (72 aa)) is c.

The protein belongs to the heat shock protein 90 family. In terms of assembly, homodimer.

It localises to the cytoplasm. In terms of biological role, molecular chaperone. Has ATPase activity. This Buchnera aphidicola subsp. Cinara cedri (strain Cc) protein is Chaperone protein HtpG.